The sequence spans 473 residues: MNAAVIDSKHSQDFIVADLSLADWGRKELDIAETEMPGLVQIREEYKAQQPLKGARVAGSLHMTIQTGVLIETLKALGADVRWASCNIFSTQDHAAAAIAKGGTPVFAFKGESLDEYWEFSHRIFEWPNGEFANMILDDGGDATLLLILGSKAEKDRSVISKPTNEEEVALYKSIARHLDADPVWYSTRLAHIKGVTEETTTGVHRLYQMEKEGRLPFPAINVNDSVTKSKFDNLYGCRESLVDGIKRATDVMIAGKIAVVAGYGDVGKGCAQSLRGLGATVWVTEIDPICALQAAMEGYRVVTMEYAADKADIFVTATGNYHVIGHDHMKAMRHNAIVCNIGHFDSEIDVASTRQYTWENIKPQVDHIIFPDGKRVILLAEGRLVNLGCATGHPSFVMSNSFTNQTLAQIELFVEGSKYENKVYVLPKQLDEKVARLHLARIGANLTELTSEQAGYIGVDKNGPFKPNHYRY.

The substrate site is built by threonine 64, aspartate 139, and glutamate 199. Residue 200–202 (TTT) participates in NAD(+) binding. Lysine 229 and aspartate 233 together coordinate substrate. NAD(+) contacts are provided by residues asparagine 234, 263–268 (GYGDVG), glutamate 286, asparagine 321, 342–344 (IGH), and asparagine 387.

This sequence belongs to the adenosylhomocysteinase family. The cofactor is NAD(+).

The protein localises to the cytoplasm. The enzyme catalyses S-adenosyl-L-homocysteine + H2O = L-homocysteine + adenosine. It participates in amino-acid biosynthesis; L-homocysteine biosynthesis; L-homocysteine from S-adenosyl-L-homocysteine: step 1/1. May play a key role in the regulation of the intracellular concentration of adenosylhomocysteine. This chain is Adenosylhomocysteinase, found in Paraburkholderia phymatum (strain DSM 17167 / CIP 108236 / LMG 21445 / STM815) (Burkholderia phymatum).